The following is a 114-amino-acid chain: Protein LLP homolog (114 aa).

2 stretches are compositionally biased toward basic residues: residues Met-1–Asn-21 and Gln-91–Leu-108. 2 disordered regions span residues Met-1 to Pro-23 and Gln-91 to Trp-114.

The protein belongs to the learning-associated protein family.

Its subcellular location is the nucleus. It localises to the nucleolus. The protein localises to the chromosome. Regulates dendritic and spine growth and synaptic transmission. In Gallus gallus (Chicken), this protein is Protein LLP homolog (LLPH).